A 103-amino-acid polypeptide reads, in one-letter code: MADSSTSELACVYSALILHDDAITAEKMNKIISAANVNVEPYWPGLFALEGKNIGDLICNVGSSGPAAGAPAAGAAGGAVEEKKEEKKAESEDESDDDMGLFD.

A disordered region spans residues 66-103 (PAAGAPAAGAAGGAVEEKKEEKKAESEDESDDDMGLFD). The span at 80–90 (VEEKKEEKKAE) shows a compositional bias: basic and acidic residues. The segment covering 91-103 (SEDESDDDMGLFD) has biased composition (acidic residues).

The protein belongs to the eukaryotic ribosomal protein P1/P2 family. P1 and P2 exist as dimers at the large ribosomal subunit.

Functionally, plays an important role in the elongation step of protein synthesis. The chain is Large ribosomal subunit protein P1 from Polyorchis penicillatus (Hydromedusa).